Here is a 213-residue protein sequence, read N- to C-terminus: Thymidylate kinase (213 aa).

10–17 (GLEGAGKT) contacts ATP.

The protein belongs to the thymidylate kinase family.

It carries out the reaction dTMP + ATP = dTDP + ADP. Phosphorylation of dTMP to form dTDP in both de novo and salvage pathways of dTTP synthesis. The protein is Thymidylate kinase of Salmonella arizonae (strain ATCC BAA-731 / CDC346-86 / RSK2980).